A 423-amino-acid chain; its full sequence is Phosphoribosylamine--glycine ligase (423 aa).

The region spanning 107 to 312 (KAFADRYGLP…LVPYLVACAN (206 aa)) is the ATP-grasp domain. Residue 133–193 (LELFEPPYVI…EEFLEGEIGS (61 aa)) coordinates ATP. Residues Glu-270, Glu-282, and Asn-284 each contribute to the Mg(2+) site. Mn(2+) contacts are provided by Glu-270, Glu-282, and Asn-284.

The protein belongs to the GARS family. The cofactor is Mg(2+). It depends on Mn(2+) as a cofactor.

It catalyses the reaction 5-phospho-beta-D-ribosylamine + glycine + ATP = N(1)-(5-phospho-beta-D-ribosyl)glycinamide + ADP + phosphate + H(+). The protein operates within purine metabolism; IMP biosynthesis via de novo pathway; N(1)-(5-phospho-D-ribosyl)glycinamide from 5-phospho-alpha-D-ribose 1-diphosphate: step 2/2. The protein is Phosphoribosylamine--glycine ligase of Phenylobacterium zucineum (strain HLK1).